The chain runs to 137 residues: Histone H2B.4 (137 aa).

The span at 1-37 shows a compositional bias: basic and acidic residues; that stretch reads MAPKAEKKPAEKKPTEEKAEKKPRAEKRVPGKEGGEK. The interval 1-45 is disordered; it reads MAPKAEKKPAEKKPTEEKAEKKPRAEKRVPGKEGGEKKGKKKAKK. Lysine 7 and lysine 27 each carry N6-acetyllysine. Residue lysine 133 forms a Glycyl lysine isopeptide (Lys-Gly) (interchain with G-Cter in ubiquitin) linkage.

The protein belongs to the histone H2B family. The nucleosome is a histone octamer containing two molecules each of H2A, H2B, H3 and H4 assembled in one H3-H4 heterotetramer and two H2A-H2B heterodimers. The octamer wraps approximately 147 bp of DNA. Post-translationally, can be acetylated to form H2BK6ac and H2BK33ac. In terms of processing, monoubiquitinated to form H2BK143ub1; may give a specific tag for epigenetic transcriptional activation.

The protein resides in the nucleus. It localises to the chromosome. In terms of biological role, core component of nucleosome. Nucleosomes wrap and compact DNA into chromatin, limiting DNA accessibility to the cellular machineries which require DNA as a template. Histones thereby play a central role in transcription regulation, DNA repair, DNA replication and chromosomal stability. DNA accessibility is regulated via a complex set of post-translational modifications of histones, also called histone code, and nucleosome remodeling. This chain is Histone H2B.4, found in Zea mays (Maize).